The primary structure comprises 188 residues: Der GTPase-activating protein YihI (188 aa).

Disordered stretches follow at residues 1–80 (MKQP…VPVP) and 162–188 (DEDD…KDTF). Over residues 27–37 (TRDELDAEARD) the composition is skewed to basic and acidic residues. Polar residues predominate over residues 47-57 (NRSGARTNVEG).

Belongs to the YihI family. Interacts with Der.

Functionally, a GTPase-activating protein (GAP) that modifies Der/EngA GTPase function. May play a role in ribosome biogenesis. The sequence is that of Der GTPase-activating protein YihI from Yersinia pseudotuberculosis serotype O:1b (strain IP 31758).